Reading from the N-terminus, the 111-residue chain is UPF0375 protein ule-4 (111 aa).

Positions 1-18 (MNSRLVLLLAVSVALVSA) are cleaved as a signal peptide. N-linked (GlcNAc...) asparagine glycans are attached at residues asparagine 23 and asparagine 58.

It belongs to the UPF0375 family.

The protein localises to the secreted. In Caenorhabditis elegans, this protein is UPF0375 protein ule-4.